The chain runs to 353 residues: Small ribosomal subunit biogenesis GTPase RsgA (353 aa).

The disordered stretch occupies residues 1 to 24 (MSKNKLSKGQQRRVKANHQRRLKT). Residues 10–23 (QQRRVKANHQRRLK) show a composition bias toward basic residues. The 171-residue stretch at 104 to 274 (ASVLTRPDFY…VIDSPGVREF (171 aa)) folds into the CP-type G domain. GTP is bound by residues 160–163 (NKID) and 214–222 (GQSGVGKSS). Cys298, Cys303, His305, and Cys311 together coordinate Zn(2+).

This sequence belongs to the TRAFAC class YlqF/YawG GTPase family. RsgA subfamily. Monomer. Associates with 30S ribosomal subunit, binds 16S rRNA. The cofactor is Zn(2+).

It localises to the cytoplasm. Functionally, one of several proteins that assist in the late maturation steps of the functional core of the 30S ribosomal subunit. Helps release RbfA from mature subunits. May play a role in the assembly of ribosomal proteins into the subunit. Circularly permuted GTPase that catalyzes slow GTP hydrolysis, GTPase activity is stimulated by the 30S ribosomal subunit. The protein is Small ribosomal subunit biogenesis GTPase RsgA of Klebsiella pneumoniae subsp. pneumoniae (strain ATCC 700721 / MGH 78578).